The primary structure comprises 173 residues: Crossover junction endodeoxyribonuclease RuvC (173 aa).

Residues Asp8, Glu67, and Asp139 contribute to the active site. Mg(2+) contacts are provided by Asp8, Glu67, and Asp139.

Belongs to the RuvC family. As to quaternary structure, homodimer which binds Holliday junction (HJ) DNA. The HJ becomes 2-fold symmetrical on binding to RuvC with unstacked arms; it has a different conformation from HJ DNA in complex with RuvA. In the full resolvosome a probable DNA-RuvA(4)-RuvB(12)-RuvC(2) complex forms which resolves the HJ. The cofactor is Mg(2+).

It is found in the cytoplasm. The catalysed reaction is Endonucleolytic cleavage at a junction such as a reciprocal single-stranded crossover between two homologous DNA duplexes (Holliday junction).. Functionally, the RuvA-RuvB-RuvC complex processes Holliday junction (HJ) DNA during genetic recombination and DNA repair. Endonuclease that resolves HJ intermediates. Cleaves cruciform DNA by making single-stranded nicks across the HJ at symmetrical positions within the homologous arms, yielding a 5'-phosphate and a 3'-hydroxyl group; requires a central core of homology in the junction. The consensus cleavage sequence is 5'-(A/T)TT(C/G)-3'. Cleavage occurs on the 3'-side of the TT dinucleotide at the point of strand exchange. HJ branch migration catalyzed by RuvA-RuvB allows RuvC to scan DNA until it finds its consensus sequence, where it cleaves and resolves the cruciform DNA. In Salmonella arizonae (strain ATCC BAA-731 / CDC346-86 / RSK2980), this protein is Crossover junction endodeoxyribonuclease RuvC.